Consider the following 264-residue polypeptide: MKTVVLAVAVLFLTGSQARHFWQRDDPQTPWDRVKDFATVYVDAVKDSGREYVSQFETSALGKQLNLNLLENWDTLGSTVGRLQEQLGPVTQEFWDNLEKETEWLRREMNKDLEEVKAKVQPYLDQFQTKWQEEVALYRQKMEPLGAELRDGARQKLQELQEKLTPLGEDLRDRMRHHVDALRTKMTPYSDQMRDRLAERLAQLKDSPTLAEYHTKAADHLKAFGEKAKPALEDLRQGLMPVFESFKTRIMSMVEEASKKLNAQ.

Residues 1–18 (MKTVVLAVAVLFLTGSQA) form the signal peptide. A run of 2 repeats spans residues 67–88 (LNLLENWDTLGSTVGRLQEQLG) and 89–110 (PVTQEFWDNLEKETEWLRREMN). A 10 X approximate tandem repeats region spans residues 67 to 264 (LNLLENWDTL…EEASKKLNAQ (198 aa)). M109 is modified (methionine sulfoxide). The 3; half-length repeat unit spans residues 111–121 (KDLEEVKAKVQ). Tandem repeats lie at residues 122 to 143 (PYLDQFQTKWQEEVALYRQKME), 144 to 165 (PLGAELRDGARQKLQELQEKLT), 166 to 187 (PLGEDLRDRMRHHVDALRTKMT), 188 to 207 (PYSDQMRDRLAERLAQLKDS), and 208 to 229 (PTLAEYHTKAADHLKAFGEKAK). M193 bears the Methionine sulfoxide mark. Residues 230–240 (PALEDLRQGLM) form a 9; half-length repeat. M240 is modified (methionine sulfoxide). The stretch at 241–264 (PVFESFKTRIMSMVEEASKKLNAQ) is repeat 10.

It belongs to the apolipoprotein A1/A4/E family. As to quaternary structure, homodimer. Interacts with APOA1BP and CLU. Component of a sperm activating protein complex (SPAP), consisting of APOA1, an immunoglobulin heavy chain, an immunoglobulin light chain and albumin. Interacts with NDRG1. Interacts with SCGB3A2. Interacts with NAXE and YJEFN3. In terms of processing, glycosylated. Post-translationally, palmitoylated. Phosphorylation sites are present in the extracellular medium. As to expression, major protein of plasma HDL, also found in chylomicrons.

The protein resides in the secreted. Functionally, participates in the reverse transport of cholesterol from tissues to the liver for excretion by promoting cholesterol efflux from tissues and by acting as a cofactor for the lecithin cholesterol acyltransferase (LCAT). As part of the SPAP complex, activates spermatozoa motility. The chain is Apolipoprotein A-I (APOAI) from Mesocricetus auratus (Golden hamster).